The primary structure comprises 231 residues: 2,3-bisphosphoglycerate-dependent phosphoglycerate mutase (231 aa).

Substrate-binding positions include 8-15 (RHGESEWN), 21-22 (TG), arginine 60, 87-90 (ERHY), lysine 98, 114-115 (RR), and 183-184 (GN). Histidine 9 (tele-phosphohistidine intermediate) is an active-site residue. Catalysis depends on glutamate 87, which acts as the Proton donor/acceptor.

The protein belongs to the phosphoglycerate mutase family. BPG-dependent PGAM subfamily.

The catalysed reaction is (2R)-2-phosphoglycerate = (2R)-3-phosphoglycerate. It participates in carbohydrate degradation; glycolysis; pyruvate from D-glyceraldehyde 3-phosphate: step 3/5. Catalyzes the interconversion of 2-phosphoglycerate and 3-phosphoglycerate. This chain is 2,3-bisphosphoglycerate-dependent phosphoglycerate mutase, found in Streptococcus equi subsp. zooepidemicus (strain H70).